The sequence spans 103 residues: MYGDIFNATGGPEAAVGSALAPGATVKAEGALPLELATARGMRDGAATKPDLPTYLLLFFLLLLSVALVVLFIGCQLRHSAFAALPHDRSLRDARAPWKTRPV.

A helical transmembrane segment spans residues 55–75; that stretch reads YLLLFFLLLLSVALVVLFIGC.

The protein localises to the membrane. The chain is Small integral membrane protein 32 from Homo sapiens (Human).